The primary structure comprises 594 residues: Aspartate--tRNA ligase (594 aa).

Glutamate 171 provides a ligand contact to L-aspartate. Positions 195–198 (QLFK) are aspartate. Arginine 217 lines the L-aspartate pocket. ATP-binding positions include 217–219 (RDE) and glutamine 226. Position 449 (histidine 449) interacts with L-aspartate. Glutamate 483 provides a ligand contact to ATP. Arginine 490 contributes to the L-aspartate binding site. An ATP-binding site is contributed by 535–538 (GLDR).

Belongs to the class-II aminoacyl-tRNA synthetase family. Type 1 subfamily. As to quaternary structure, homodimer.

The protein localises to the cytoplasm. It catalyses the reaction tRNA(Asp) + L-aspartate + ATP = L-aspartyl-tRNA(Asp) + AMP + diphosphate. Its function is as follows. Catalyzes the attachment of L-aspartate to tRNA(Asp) in a two-step reaction: L-aspartate is first activated by ATP to form Asp-AMP and then transferred to the acceptor end of tRNA(Asp). In Proteus mirabilis (strain HI4320), this protein is Aspartate--tRNA ligase.